We begin with the raw amino-acid sequence, 505 residues long: Deoxyguanosinetriphosphate triphosphohydrolase (505 aa).

Residues 66–273 (RLTHSMEVQQ…MEAADDISYC (208 aa)) form the HD domain.

This sequence belongs to the dGTPase family. Type 1 subfamily. In terms of assembly, homotetramer. Requires Mg(2+) as cofactor.

It carries out the reaction dGTP + H2O = 2'-deoxyguanosine + triphosphate + H(+). In terms of biological role, dGTPase preferentially hydrolyzes dGTP over the other canonical NTPs. This chain is Deoxyguanosinetriphosphate triphosphohydrolase, found in Escherichia coli O139:H28 (strain E24377A / ETEC).